Here is a 205-residue protein sequence, read N- to C-terminus: Proteasome subunit beta type-3 (205 aa).

Ser2 carries the post-translational modification N-acetylserine. An N6-acetyllysine modification is found at Lys77.

Belongs to the peptidase T1B family. In terms of assembly, the 26S proteasome consists of a 20S proteasome core and two 19S regulatory subunits. The 20S proteasome core is a barrel-shaped complex made of 28 subunits that are arranged in four stacked rings. The two outer rings are each formed by seven alpha subunits, and the two inner rings are formed by seven beta subunits. The proteolytic activity is exerted by three beta-subunits PSMB5, PSMB6 and PSMB7. As to expression, detected in liver (at protein level).

Its subcellular location is the cytoplasm. The protein resides in the nucleus. Functionally, non-catalytic component of the 20S core proteasome complex involved in the proteolytic degradation of most intracellular proteins. This complex plays numerous essential roles within the cell by associating with different regulatory particles. Associated with two 19S regulatory particles, forms the 26S proteasome and thus participates in the ATP-dependent degradation of ubiquitinated proteins. The 26S proteasome plays a key role in the maintenance of protein homeostasis by removing misfolded or damaged proteins that could impair cellular functions, and by removing proteins whose functions are no longer required. Associated with the PA200 or PA28, the 20S proteasome mediates ubiquitin-independent protein degradation. This type of proteolysis is required in several pathways including spermatogenesis (20S-PA200 complex) or generation of a subset of MHC class I-presented antigenic peptides (20S-PA28 complex). The sequence is that of Proteasome subunit beta type-3 (Psmb3) from Mus musculus (Mouse).